Reading from the N-terminus, the 616-residue chain is Dihydroxy-acid dehydratase (616 aa).

A Mg(2+)-binding site is contributed by D81. Residue C122 coordinates [2Fe-2S] cluster. The Mg(2+) site is built by D123 and K124. K124 bears the N6-carboxylysine mark. C195 is a [2Fe-2S] cluster binding site. E491 contributes to the Mg(2+) binding site. The Proton acceptor role is filled by S517.

The protein belongs to the IlvD/Edd family. As to quaternary structure, homodimer. It depends on [2Fe-2S] cluster as a cofactor. Mg(2+) serves as cofactor.

It catalyses the reaction (2R)-2,3-dihydroxy-3-methylbutanoate = 3-methyl-2-oxobutanoate + H2O. It carries out the reaction (2R,3R)-2,3-dihydroxy-3-methylpentanoate = (S)-3-methyl-2-oxopentanoate + H2O. It functions in the pathway amino-acid biosynthesis; L-isoleucine biosynthesis; L-isoleucine from 2-oxobutanoate: step 3/4. It participates in amino-acid biosynthesis; L-valine biosynthesis; L-valine from pyruvate: step 3/4. Its function is as follows. Functions in the biosynthesis of branched-chain amino acids. Catalyzes the dehydration of (2R,3R)-2,3-dihydroxy-3-methylpentanoate (2,3-dihydroxy-3-methylvalerate) into 2-oxo-3-methylpentanoate (2-oxo-3-methylvalerate) and of (2R)-2,3-dihydroxy-3-methylbutanoate (2,3-dihydroxyisovalerate) into 2-oxo-3-methylbutanoate (2-oxoisovalerate), the penultimate precursor to L-isoleucine and L-valine, respectively. This is Dihydroxy-acid dehydratase from Klebsiella pneumoniae (strain 342).